Here is a 348-residue protein sequence, read N- to C-terminus: D-alanine--D-alanine ligase (348 aa).

Residues 132-334 (KRVLESAGIP…YSDLIEELVS (203 aa)) enclose the ATP-grasp domain. Position 162–217 (162–217 (LETLSFPIFVKPANMGSSVGISKAESIEGLREAIALALKYDSRILIEQGVVAREIE)) interacts with ATP. 3 residues coordinate Mg(2+): Asp288, Glu301, and Asn303.

It belongs to the D-alanine--D-alanine ligase family. It depends on Mg(2+) as a cofactor. Mn(2+) is required as a cofactor.

The protein resides in the cytoplasm. It carries out the reaction 2 D-alanine + ATP = D-alanyl-D-alanine + ADP + phosphate + H(+). It functions in the pathway cell wall biogenesis; peptidoglycan biosynthesis. In terms of biological role, cell wall formation. This is D-alanine--D-alanine ligase from Streptococcus uberis (strain ATCC BAA-854 / 0140J).